We begin with the raw amino-acid sequence, 209 residues long: Thymidine kinase (209 aa).

ATP is bound by residues 9 to 16 (SAMNAGKT) and 88 to 91 (DEAQ). Glu89 serves as the catalytic Proton acceptor.

This sequence belongs to the thymidine kinase family. As to quaternary structure, homotetramer.

The protein localises to the cytoplasm. The catalysed reaction is thymidine + ATP = dTMP + ADP + H(+). The protein is Thymidine kinase of Xanthomonas axonopodis pv. citri (strain 306).